The primary structure comprises 379 residues: Alcohol dehydrogenase class-3 (379 aa).

S2 is modified (N-acetylserine). Residues C48, H70, C100, C103, C106, C114, and C177 each coordinate Zn(2+).

This sequence belongs to the zinc-containing alcohol dehydrogenase family. Class-III subfamily. It depends on Zn(2+) as a cofactor.

The enzyme catalyses a primary alcohol + NAD(+) = an aldehyde + NADH + H(+). It carries out the reaction a secondary alcohol + NAD(+) = a ketone + NADH + H(+). It catalyses the reaction S-(hydroxymethyl)glutathione + NADP(+) = S-formylglutathione + NADPH + H(+). The catalysed reaction is S-(hydroxymethyl)glutathione + NAD(+) = S-formylglutathione + NADH + H(+). The enzyme catalyses octan-1-ol + NAD(+) = octanal + NADH + H(+). Class-III ADH is remarkably ineffective in oxidizing ethanol, but it readily catalyzes the oxidation of long-chain primary alcohols and the oxidation of S-(hydroxymethyl) glutathione. The sequence is that of Alcohol dehydrogenase class-3 (Fdh) from Drosophila melanogaster (Fruit fly).